The following is a 225-amino-acid chain: Octanoyltransferase (225 aa).

The 182-residue stretch at 29-210 (PDTDDEIWVV…RLIAHLDGAT (182 aa)) folds into the BPL/LPL catalytic domain. Residues 69–76 (RGGQITYH), 141–143 (ALG), and 154–156 (GLS) contribute to the substrate site. Residue cysteine 172 is the Acyl-thioester intermediate of the active site.

It belongs to the LipB family.

The protein localises to the cytoplasm. It catalyses the reaction octanoyl-[ACP] + L-lysyl-[protein] = N(6)-octanoyl-L-lysyl-[protein] + holo-[ACP] + H(+). It functions in the pathway protein modification; protein lipoylation via endogenous pathway; protein N(6)-(lipoyl)lysine from octanoyl-[acyl-carrier-protein]: step 1/2. Functionally, catalyzes the transfer of endogenously produced octanoic acid from octanoyl-acyl-carrier-protein onto the lipoyl domains of lipoate-dependent enzymes. Lipoyl-ACP can also act as a substrate although octanoyl-ACP is likely to be the physiological substrate. The chain is Octanoyltransferase from Burkholderia pseudomallei (strain K96243).